Consider the following 348-residue polypeptide: Protein RecA (348 aa).

67–74 is an ATP binding site; it reads GPESSGKT.

Belongs to the RecA family.

The protein resides in the cytoplasm. Functionally, can catalyze the hydrolysis of ATP in the presence of single-stranded DNA, the ATP-dependent uptake of single-stranded DNA by duplex DNA, and the ATP-dependent hybridization of homologous single-stranded DNAs. It interacts with LexA causing its activation and leading to its autocatalytic cleavage. This chain is Protein RecA, found in Clostridioides difficile (strain 630) (Peptoclostridium difficile).